The sequence spans 81 residues: Protease inhibitor 3 (81 aa).

An N-terminal signal peptide occupies residues 1–24 (MSSGCLLLLLGLLTLWAELTPVSG). A BPTI/Kunitz inhibitor domain is found at 29 to 79 (CELPAESGLCNAYIPSFYYNPHSHKCQKFMYGGCGGNANNFKTIVECHRTC). 3 disulfides stabilise this stretch: Cys29–Cys79, Cys38–Cys62, and Cys54–Cys75.

It belongs to the venom Kunitz-type family. In terms of tissue distribution, expressed by the venom gland.

It localises to the secreted. In terms of biological role, snake venom serine protease inhibitor. The chain is Protease inhibitor 3 from Walterinnesia aegyptia (Desert black snake).